The sequence spans 140 residues: Phosphoribosyl-AMP cyclohydrolase (140 aa).

Asp-85 is a Mg(2+) binding site. Zn(2+) is bound at residue Cys-86. 2 residues coordinate Mg(2+): Asp-87 and Asp-89. Residues Cys-102 and Cys-109 each coordinate Zn(2+).

The protein belongs to the PRA-CH family. As to quaternary structure, homodimer. The cofactor is Mg(2+). It depends on Zn(2+) as a cofactor.

The protein resides in the cytoplasm. It carries out the reaction 1-(5-phospho-beta-D-ribosyl)-5'-AMP + H2O = 1-(5-phospho-beta-D-ribosyl)-5-[(5-phospho-beta-D-ribosylamino)methylideneamino]imidazole-4-carboxamide. It participates in amino-acid biosynthesis; L-histidine biosynthesis; L-histidine from 5-phospho-alpha-D-ribose 1-diphosphate: step 3/9. Functionally, catalyzes the hydrolysis of the adenine ring of phosphoribosyl-AMP. The polypeptide is Phosphoribosyl-AMP cyclohydrolase (Bradyrhizobium diazoefficiens (strain JCM 10833 / BCRC 13528 / IAM 13628 / NBRC 14792 / USDA 110)).